The chain runs to 272 residues: Endoplasmic reticulum resident protein 27 (272 aa).

The first 25 residues, 1–25, serve as a signal peptide directing secretion; the sequence is MEAMPSRCLFLLFLSTCKLSPEVVA. Positions 38-151 constitute a Thioredoxin domain; the sequence is EPMRLTDVQA…LVTEYNAITA (114 aa). Asn-99 carries an N-linked (GlcNAc...) asparagine glycan. Positions 229-232 are PDIA3-binding site; the sequence is DKWD. The Prevents secretion from ER signature appears at 269–272; it reads KVEL.

It belongs to the protein disulfide isomerase family. In terms of assembly, interacts with PDIA3.

It localises to the endoplasmic reticulum lumen. Functionally, specifically binds unfolded proteins and may recruit protein disulfide isomerase PDIA3 to unfolded substrates. Binds protein substrates via a hydrophobic pocket in the C-terminal domain. May play a role in the unfolded stress response. The chain is Endoplasmic reticulum resident protein 27 (ERP27) from Bos taurus (Bovine).